Reading from the N-terminus, the 328-residue chain is DNA-directed RNA polymerase subunit alpha (328 aa).

Positions 1–231 are alpha N-terminal domain (alpha-NTD); it reads MIQQMQMPEK…DHVRLFSLFS (231 aa). The interval 252–328 is alpha C-terminal domain (alpha-CTD); that stretch reads MRKLLMTRIE…MEVTKYRLNQ (77 aa).

It belongs to the RNA polymerase alpha chain family. In terms of assembly, homodimer. The RNAP catalytic core consists of 2 alpha, 1 beta, 1 beta' and 1 omega subunit. When a sigma factor is associated with the core the holoenzyme is formed, which can initiate transcription.

The catalysed reaction is RNA(n) + a ribonucleoside 5'-triphosphate = RNA(n+1) + diphosphate. Its function is as follows. DNA-dependent RNA polymerase catalyzes the transcription of DNA into RNA using the four ribonucleoside triphosphates as substrates. The polypeptide is DNA-directed RNA polymerase subunit alpha (Chloroherpeton thalassium (strain ATCC 35110 / GB-78)).